Reading from the N-terminus, the 557-residue chain is Dihydroxy-acid dehydratase (557 aa).

Cys-50 is a binding site for [2Fe-2S] cluster. Residue Asp-82 coordinates Mg(2+). Cys-123 provides a ligand contact to [2Fe-2S] cluster. Residues Asp-124 and Lys-125 each contribute to the Mg(2+) site. Lys-125 is subject to N6-carboxylysine. Residue Cys-195 coordinates [2Fe-2S] cluster. Residue Glu-447 participates in Mg(2+) binding. Ser-473 functions as the Proton acceptor in the catalytic mechanism.

Belongs to the IlvD/Edd family. As to quaternary structure, homodimer. It depends on [2Fe-2S] cluster as a cofactor. The cofactor is Mg(2+).

It catalyses the reaction (2R)-2,3-dihydroxy-3-methylbutanoate = 3-methyl-2-oxobutanoate + H2O. It carries out the reaction (2R,3R)-2,3-dihydroxy-3-methylpentanoate = (S)-3-methyl-2-oxopentanoate + H2O. It functions in the pathway amino-acid biosynthesis; L-isoleucine biosynthesis; L-isoleucine from 2-oxobutanoate: step 3/4. Its pathway is amino-acid biosynthesis; L-valine biosynthesis; L-valine from pyruvate: step 3/4. Functionally, functions in the biosynthesis of branched-chain amino acids. Catalyzes the dehydration of (2R,3R)-2,3-dihydroxy-3-methylpentanoate (2,3-dihydroxy-3-methylvalerate) into 2-oxo-3-methylpentanoate (2-oxo-3-methylvalerate) and of (2R)-2,3-dihydroxy-3-methylbutanoate (2,3-dihydroxyisovalerate) into 2-oxo-3-methylbutanoate (2-oxoisovalerate), the penultimate precursor to L-isoleucine and L-valine, respectively. The chain is Dihydroxy-acid dehydratase from Nitrosospira multiformis (strain ATCC 25196 / NCIMB 11849 / C 71).